The sequence spans 220 residues: Chaperone protein TorD (220 aa).

This sequence belongs to the TorD/DmsD family. TorD subfamily.

The protein localises to the cytoplasm. Involved in the biogenesis of TorA. Acts on TorA before the insertion of the molybdenum cofactor and, as a result, probably favors a conformation of the apoenzyme that is competent for acquiring the cofactor. The protein is Chaperone protein TorD of Vibrio cholerae serotype O1 (strain ATCC 39541 / Classical Ogawa 395 / O395).